Here is a 527-residue protein sequence, read N- to C-terminus: NADH-ubiquinone oxidoreductase chain 5 (527 aa).

A run of 14 helical transmembrane segments spans residues 3–23, 43–63, 75–95, 98–118, 141–161, 168–188, 197–217, 226–246, 263–283, 318–338, 357–377, 398–418, 432–452, and 507–527; these read ISIFLIGFVFFMGGISVWLMP, FYFNSILFSFILFLVTFSVLV, FNYYYFVLLIFVGSMFSLNFS, IFTMLLSWDLLGISSFFLVLF, FMFVFFGLSVFSGYYFLSFSM, LLLLLTAFTKSAQFPFSSWLP, VSSLVHSSTLVTAGLILLMNF, FISFVLIIGLFTMFFSSLASL, MGFSMVTLGLGLSFISFIHLV, LPNFIQLQMLVTLFCLCGLIF, YMMFFSLMFFVSVFLTFGYSF, VFMNFLSLVLVIFSISFLWWM, VDFFGPLVFLFMMIFLSFLIL, and YLKSLNFNSVVVLIFIFFMIC.

The protein belongs to the complex I subunit 5 family.

The protein resides in the mitochondrion inner membrane. It catalyses the reaction a ubiquinone + NADH + 5 H(+)(in) = a ubiquinol + NAD(+) + 4 H(+)(out). In terms of biological role, core subunit of the mitochondrial membrane respiratory chain NADH dehydrogenase (Complex I) that is believed to belong to the minimal assembly required for catalysis. Complex I functions in the transfer of electrons from NADH to the respiratory chain. The immediate electron acceptor for the enzyme is believed to be ubiquinone. The chain is NADH-ubiquinone oxidoreductase chain 5 from Caenorhabditis elegans.